The sequence spans 302 residues: Protein NEOXANTHIN-DEFICIENT 1 (302 aa).

Functionally, required for neoxanthin biosynthesis. Probably not involved directly in the enzymatic conversion of violaxanthin to neoxanthin. Is necessary but not sufficient for neoxanthin synthesis. The protein is Protein NEOXANTHIN-DEFICIENT 1 of Oryza sativa subsp. japonica (Rice).